The following is a 101-amino-acid chain: Large ribosomal subunit protein P1 (101 aa).

Residues 61–72 (AAPAAAAAPAAA) are compositionally biased toward low complexity. The tract at residues 61 to 101 (AAPAAAAAPAAAEEAEEEAEEEEEEEEAEEEAAAGLGALFG) is disordered. Over residues 73–92 (EEAEEEAEEEEEEEEAEEEA) the composition is skewed to acidic residues.

It belongs to the eukaryotic ribosomal protein P1/P2 family. In terms of assembly, part of the 50S ribosomal subunit. Homodimer, it forms part of the ribosomal stalk which helps the ribosome interact with GTP-bound translation factors. Forms a heptameric uL10/P0(P1)2(P1)2(P1)2 complex, where uL10/P0 forms an elongated spine to which the P1 dimers bind in a sequential fashion.

Its function is as follows. Forms part of the ribosomal stalk, playing a central role in the interaction of the ribosome with GTP-bound translation factors. The sequence is that of Large ribosomal subunit protein P1 from Methanothermobacter thermautotrophicus (strain ATCC 29096 / DSM 1053 / JCM 10044 / NBRC 100330 / Delta H) (Methanobacterium thermoautotrophicum).